Consider the following 188-residue polypeptide: Cytochrome b-245 chaperone 1 homolog (188 aa).

The helical transmembrane segment at 20-42 (SIRSWSLLVGILSVGLAAAYYST) threads the bilayer.

This sequence belongs to the CYBC1 family.

The protein resides in the endoplasmic reticulum membrane. Its function is as follows. Functions as a chaperone necessary for a stable expression of the CYBA and CYBB subunits of the cytochrome b-245 heterodimer. The protein is Cytochrome b-245 chaperone 1 homolog (cybc1) of Xenopus laevis (African clawed frog).